The primary structure comprises 436 residues: ATP-dependent protease ATPase subunit HslU (436 aa).

ATP contacts are provided by residues valine 18, 60–65, aspartate 249, glutamate 314, and arginine 386; that span reads GVGKTE.

The protein belongs to the ClpX chaperone family. HslU subfamily. A double ring-shaped homohexamer of HslV is capped on each side by a ring-shaped HslU homohexamer. The assembly of the HslU/HslV complex is dependent on binding of ATP.

The protein resides in the cytoplasm. ATPase subunit of a proteasome-like degradation complex; this subunit has chaperone activity. The binding of ATP and its subsequent hydrolysis by HslU are essential for unfolding of protein substrates subsequently hydrolyzed by HslV. HslU recognizes the N-terminal part of its protein substrates and unfolds these before they are guided to HslV for hydrolysis. The chain is ATP-dependent protease ATPase subunit HslU from Rhizobium rhizogenes (strain K84 / ATCC BAA-868) (Agrobacterium radiobacter).